The primary structure comprises 454 residues: Photosystem II CP47 reaction center protein (454 aa).

Helical transmembrane passes span 6 to 26, 47 to 61, 86 to 102, 149 to 164, 183 to 198, and 403 to 418; these read MFVL…GWTI, IILS…IWHW, GIHL…FGAF, IAAG…FHLS, VLSS…AFVV, and SFAL…HGAR.

Belongs to the PsbB/PsbC family. PsbB subfamily. In terms of assembly, PSII is composed of 1 copy each of membrane proteins PsbA, PsbB, PsbC, PsbD, PsbE, PsbF, PsbH, PsbI, PsbJ, PsbK, PsbL, PsbM, PsbT, PsbX, PsbY, PsbZ, Psb30/Ycf12, at least 3 peripheral proteins of the oxygen-evolving complex and a large number of cofactors. It forms dimeric complexes. Requires Binds multiple chlorophylls. PSII binds additional chlorophylls, carotenoids and specific lipids. as cofactor.

It localises to the plastid. The protein resides in the chloroplast thylakoid membrane. Its function is as follows. One of the components of the core complex of photosystem II (PSII). It binds chlorophyll and helps catalyze the primary light-induced photochemical processes of PSII. PSII is a light-driven water:plastoquinone oxidoreductase, using light energy to abstract electrons from H(2)O, generating O(2) and a proton gradient subsequently used for ATP formation. The chain is Photosystem II CP47 reaction center protein from Ostreococcus tauri.